A 313-amino-acid polypeptide reads, in one-letter code: uncharacterized protein (313 aa).

29 to 61 lines the NADP(+) pocket; the sequence is ALVTGGGTGLGKAIATTFAHLGASVAIAARRLD.

It belongs to the short-chain dehydrogenases/reductases (SDR) family. 2,4-dienoyl-CoA reductase subfamily.

This is an uncharacterized protein from Caenorhabditis elegans.